A 204-amino-acid polypeptide reads, in one-letter code: Putative peptidase PfaP (204 aa).

A signal peptide spans 1–27 (MRLRKTRKIVVSMKDMAASGGYYIASS). Serine 19 functions as the Nucleophile in the catalytic mechanism. Lysine 70 acts as the Proton donor/acceptor in catalysis.

This sequence belongs to the peptidase S49 family.

Its function is as follows. Possible protease. May be involved in export of periplasmic flagella proteins. The polypeptide is Putative peptidase PfaP (pfaP) (Leptospira borgpetersenii).